A 481-amino-acid polypeptide reads, in one-letter code: WASH complex subunit 1 (481 aa).

Residues 1 to 54 form a required for WASH complex assembly region; it reads MVRMTQKRYLEGQVYSVPLIQPDLRREEAVHQITDALQYLEMISTDIFTRVSES. Disordered regions lie at residues 273–417 and 429–481; these read SVPA…SGGD and RRKG…DWEA. Pro residues predominate over residues 304–341; the sequence is APPPPPPPPPPPPEPTHVPVPPPGTSAAPPPPPPPPPM. Residues 359–481 form a VCA region; that stretch reads KGAPSEVVQP…AADDEDDWEA (123 aa). One can recognise a WH2 domain in the interval 371-393; that stretch reads GRASLLESIRNAGGIGKANLRNV. The segment covering 392-407 has biased composition (basic and acidic residues); the sequence is NVKERKMEKKKQKEQE.

The protein belongs to the WASH1 family. Component of the WASH complex.

The protein localises to the early endosome membrane. The protein resides in the recycling endosome membrane. Acts as a nucleation-promoting factor at the surface of endosomes, where it recruits and activates the Arp2/3 complex to induce actin polymerization, playing a key role in the fission of tubules that serve as transport intermediates during endosome sorting. This chain is WASH complex subunit 1, found in Danio rerio (Zebrafish).